Reading from the N-terminus, the 96-residue chain is ATP synthase subunit c (96 aa).

2 helical membrane-spanning segments follow: residues 9–29 (FIACVTAAGFGIAIAAFGCGI) and 58–78 (IGLAMIESLCIYALVVALILI).

Belongs to the ATPase C chain family. As to quaternary structure, F-type ATPases have 2 components, F(1) - the catalytic core - and F(0) - the membrane proton channel. F(1) has five subunits: alpha(3), beta(3), gamma(1), delta(1), epsilon(1). F(0) has three main subunits: a(1), b(2) and c(10-14). The alpha and beta chains form an alternating ring which encloses part of the gamma chain. F(1) is attached to F(0) by a central stalk formed by the gamma and epsilon chains, while a peripheral stalk is formed by the delta and b chains.

Its subcellular location is the cell inner membrane. F(1)F(0) ATP synthase produces ATP from ADP in the presence of a proton or sodium gradient. F-type ATPases consist of two structural domains, F(1) containing the extramembraneous catalytic core and F(0) containing the membrane proton channel, linked together by a central stalk and a peripheral stalk. During catalysis, ATP synthesis in the catalytic domain of F(1) is coupled via a rotary mechanism of the central stalk subunits to proton translocation. Functionally, key component of the F(0) channel; it plays a direct role in translocation across the membrane. A homomeric c-ring of between 10-14 subunits forms the central stalk rotor element with the F(1) delta and epsilon subunits. The sequence is that of ATP synthase subunit c from Desulfosudis oleivorans (strain DSM 6200 / JCM 39069 / Hxd3) (Desulfococcus oleovorans).